A 294-amino-acid chain; its full sequence is 4-hydroxy-tetrahydrodipicolinate synthase (294 aa).

Residue threonine 45 coordinates pyruvate. Tyrosine 133 serves as the catalytic Proton donor/acceptor. Lysine 161 serves as the catalytic Schiff-base intermediate with substrate. A pyruvate-binding site is contributed by isoleucine 203.

It belongs to the DapA family. Homotetramer; dimer of dimers.

The protein resides in the cytoplasm. The enzyme catalyses L-aspartate 4-semialdehyde + pyruvate = (2S,4S)-4-hydroxy-2,3,4,5-tetrahydrodipicolinate + H2O + H(+). Its pathway is amino-acid biosynthesis; L-lysine biosynthesis via DAP pathway; (S)-tetrahydrodipicolinate from L-aspartate: step 3/4. Functionally, catalyzes the condensation of (S)-aspartate-beta-semialdehyde [(S)-ASA] and pyruvate to 4-hydroxy-tetrahydrodipicolinate (HTPA). In Buchnera aphidicola subsp. Acyrthosiphon pisum (strain APS) (Acyrthosiphon pisum symbiotic bacterium), this protein is 4-hydroxy-tetrahydrodipicolinate synthase.